We begin with the raw amino-acid sequence, 266 residues long: Thiazole synthase (266 aa).

The active-site Schiff-base intermediate with DXP is the Lys-110. 1-deoxy-D-xylulose 5-phosphate-binding positions include Gly-171, Ala-197–Gly-198, and Ala-219–Thr-220.

The protein belongs to the ThiG family. As to quaternary structure, homotetramer. Forms heterodimers with either ThiH or ThiS.

It is found in the cytoplasm. It catalyses the reaction [ThiS sulfur-carrier protein]-C-terminal-Gly-aminoethanethioate + 2-iminoacetate + 1-deoxy-D-xylulose 5-phosphate = [ThiS sulfur-carrier protein]-C-terminal Gly-Gly + 2-[(2R,5Z)-2-carboxy-4-methylthiazol-5(2H)-ylidene]ethyl phosphate + 2 H2O + H(+). The protein operates within cofactor biosynthesis; thiamine diphosphate biosynthesis. Its function is as follows. Catalyzes the rearrangement of 1-deoxy-D-xylulose 5-phosphate (DXP) to produce the thiazole phosphate moiety of thiamine. Sulfur is provided by the thiocarboxylate moiety of the carrier protein ThiS. In vitro, sulfur can be provided by H(2)S. In Thermobifida fusca (strain YX), this protein is Thiazole synthase.